Here is a 568-residue protein sequence, read N- to C-terminus: Sulfite reductase [NADPH] hemoprotein beta-component (568 aa).

Positions 426, 432, 471, and 475 each coordinate [4Fe-4S] cluster. A siroheme-binding site is contributed by Cys475.

This sequence belongs to the nitrite and sulfite reductase 4Fe-4S domain family. As to quaternary structure, alpha(8)-beta(8). The alpha component is a flavoprotein, the beta component is a hemoprotein. It depends on siroheme as a cofactor. Requires [4Fe-4S] cluster as cofactor.

The catalysed reaction is hydrogen sulfide + 3 NADP(+) + 3 H2O = sulfite + 3 NADPH + 4 H(+). It functions in the pathway sulfur metabolism; hydrogen sulfide biosynthesis; hydrogen sulfide from sulfite (NADPH route): step 1/1. Functionally, component of the sulfite reductase complex that catalyzes the 6-electron reduction of sulfite to sulfide. This is one of several activities required for the biosynthesis of L-cysteine from sulfate. The chain is Sulfite reductase [NADPH] hemoprotein beta-component from Xylella fastidiosa (strain 9a5c).